A 101-amino-acid polypeptide reads, in one-letter code: Large ribosomal subunit protein eL36 (101 aa).

2 disordered regions span residues 1-31 and 75-101; these read MGEI…GFLS and GTHM…SKGE.

Belongs to the eukaryotic ribosomal protein eL36 family.

The chain is Large ribosomal subunit protein eL36 (RL36) from Ulva compressa (Green alga).